We begin with the raw amino-acid sequence, 178 residues long: Large ribosomal subunit protein uL5 (178 aa).

This sequence belongs to the universal ribosomal protein uL5 family. In terms of assembly, part of the 50S ribosomal subunit; part of the 5S rRNA/L5/L18/L25 subcomplex. Contacts the 5S rRNA and the P site tRNA. Forms a bridge to the 30S subunit in the 70S ribosome.

Functionally, this is one of the proteins that bind and probably mediate the attachment of the 5S RNA into the large ribosomal subunit, where it forms part of the central protuberance. In the 70S ribosome it contacts protein S13 of the 30S subunit (bridge B1b), connecting the 2 subunits; this bridge is implicated in subunit movement. Contacts the P site tRNA; the 5S rRNA and some of its associated proteins might help stabilize positioning of ribosome-bound tRNAs. This is Large ribosomal subunit protein uL5 from Aliivibrio fischeri (strain ATCC 700601 / ES114) (Vibrio fischeri).